A 336-amino-acid chain; its full sequence is TBC1 domain family member 21 (336 aa).

Positions 57–265 (GLHPFVRTEA…RLWEVLLTGK (209 aa)) constitute a Rab-GAP TBC domain.

In terms of assembly, interacts with ACTB. Interacts with ARMC12. Interacts with TOMM20 and DNAH7. Interacts with RAP1A. Interacts with RAB10. As to expression, expressed in testis, specifically in elongating and elongated spermatids (at protein level). Expressed in the sperm midpiece (at protein level).

It localises to the cytoplasmic vesicle. The protein localises to the secretory vesicle. The protein resides in the acrosome. Its subcellular location is the cytoplasm. It is found in the cytoskeleton. Acts as a GTPase-activating protein for Rab family protein (s). Essential for the establishment of male fertility, and is required for both the production of normal sperm number and sperm function. Plays an important role in the formation of intact mitochondria, outer dense fibers and axoneme within the sperm tail. Essential for sperm mitochondrial sheath formation and for the interactions of ARMC12 with VDAC2 and VDAC3. May be involved in acrosome formation and cytoskeletal reorganization during spermiogenesis, possibly by regulating RAB3A activity. This is TBC1 domain family member 21 from Mus musculus (Mouse).